An 822-amino-acid polypeptide reads, in one-letter code: SKI/DACH domain-containing protein 1 (822 aa).

A compositionally biased stretch (basic residues) spans 245 to 261 (HHHHHHHHHHHHHHHRA). Positions 245 to 370 (HHHHHHHHHH…SSSGSSQVSV (126 aa)) are disordered. Over residues 278–318 (PHLGSFPESCSSDSESSSYSDHAANDSDFGSSLSSSSNSVS) the composition is skewed to low complexity. Over residues 319 to 338 (SEEEEEEGEEEEEEEEEEEG) the composition is skewed to acidic residues. Lys-602 participates in a covalent cross-link: Glycyl lysine isopeptide (Lys-Gly) (interchain with G-Cter in SUMO2). Disordered regions lie at residues 658–677 (ETPS…TLGS) and 706–732 (LQTP…THEG). Residues 660–675 (PSLNPLAQSQGLSCTL) show a composition bias toward polar residues.

This sequence belongs to the DACH/dachshund family.

This chain is SKI/DACH domain-containing protein 1 (Skida1), found in Mus musculus (Mouse).